The primary structure comprises 223 residues: MNIILFGPPGAGKGTQAHRLVHDFGMVQLSTGDILRQAVKEGTEVGKIAGELMKAGKLIPDDLMIRILGERLDKPDTKNGVIFDGFPRTKPQVEALDKLLAERHSKLDCVIEIKVDENALVKRIVGRYVCAQCGAGYHDEFKRPHKEGVCDICGSTEFKRRPDDNEEAVRARLVEYHEKTAPILPVYEARGIVAYVDGMLPMGDVATKIAEILKEKGAKPISA.

Position 10 to 15 (glycine 10 to threonine 15) interacts with ATP. Residues serine 30–isoleucine 59 form an NMP region. AMP-binding positions include threonine 31, arginine 36, lysine 57 to isoleucine 59, glycine 85 to arginine 88, and glutamine 92. The segment at glycine 126–aspartate 163 is LID. An ATP-binding site is contributed by arginine 127. Zn(2+) contacts are provided by cysteine 130, cysteine 133, cysteine 150, and cysteine 153. AMP-binding residues include arginine 160 and arginine 172. Leucine 200 provides a ligand contact to ATP.

The protein belongs to the adenylate kinase family. In terms of assembly, monomer.

It is found in the cytoplasm. It catalyses the reaction AMP + ATP = 2 ADP. Its pathway is purine metabolism; AMP biosynthesis via salvage pathway; AMP from ADP: step 1/1. Its function is as follows. Catalyzes the reversible transfer of the terminal phosphate group between ATP and AMP. Plays an important role in cellular energy homeostasis and in adenine nucleotide metabolism. This Zymomonas mobilis subsp. mobilis (strain ATCC 31821 / ZM4 / CP4) protein is Adenylate kinase.